A 263-amino-acid chain; its full sequence is 3-methyl-2-oxobutanoate hydroxymethyltransferase (263 aa).

Asp-45 and Asp-84 together coordinate Mg(2+). 3-methyl-2-oxobutanoate-binding positions include 45 to 46, Asp-84, and Lys-112; that span reads DS. A Mg(2+)-binding site is contributed by Glu-114. Glu-181 functions as the Proton acceptor in the catalytic mechanism.

Belongs to the PanB family. In terms of assembly, homodecamer; pentamer of dimers. Mg(2+) serves as cofactor.

It is found in the cytoplasm. The enzyme catalyses 3-methyl-2-oxobutanoate + (6R)-5,10-methylene-5,6,7,8-tetrahydrofolate + H2O = 2-dehydropantoate + (6S)-5,6,7,8-tetrahydrofolate. The protein operates within cofactor biosynthesis; (R)-pantothenate biosynthesis; (R)-pantoate from 3-methyl-2-oxobutanoate: step 1/2. Functionally, catalyzes the reversible reaction in which hydroxymethyl group from 5,10-methylenetetrahydrofolate is transferred onto alpha-ketoisovalerate to form ketopantoate. The chain is 3-methyl-2-oxobutanoate hydroxymethyltransferase from Buchnera aphidicola subsp. Schizaphis graminum (strain Sg).